The chain runs to 469 residues: Glutamate--tRNA ligase (469 aa).

Residues 11 to 21 (PSPTGFIHLGN) carry the 'HIGH' region motif. A compositionally biased stretch (basic and acidic residues) spans 114-131 (QREAGEKPRYDGTWRPEP). The tract at residues 114 to 139 (QREAGEKPRYDGTWRPEPGKVLPEPP) is disordered. A 'KMSKS' region motif is present at residues 243-247 (KMSKR). Lysine 246 contributes to the ATP binding site.

It belongs to the class-I aminoacyl-tRNA synthetase family. Glutamate--tRNA ligase type 1 subfamily. Monomer.

The protein localises to the cytoplasm. It carries out the reaction tRNA(Glu) + L-glutamate + ATP = L-glutamyl-tRNA(Glu) + AMP + diphosphate. Functionally, catalyzes the attachment of glutamate to tRNA(Glu) in a two-step reaction: glutamate is first activated by ATP to form Glu-AMP and then transferred to the acceptor end of tRNA(Glu). This is Glutamate--tRNA ligase from Paraburkholderia xenovorans (strain LB400).